A 528-amino-acid chain; its full sequence is GMP synthase [glutamine-hydrolyzing] (528 aa).

The region spanning 13–204 (SILILDFGSQ…VYKISCCAAD (192 aa)) is the Glutamine amidotransferase type-1 domain. The Nucleophile role is filled by cysteine 90. Catalysis depends on residues histidine 178 and glutamate 180. Residues 205–403 (WTTETYIEET…LGLPAEIIKR (199 aa)) enclose the GMPS ATP-PPase domain. 232 to 238 (SGGVDSS) is an ATP binding site.

In terms of assembly, homodimer.

It carries out the reaction XMP + L-glutamine + ATP + H2O = GMP + L-glutamate + AMP + diphosphate + 2 H(+). The protein operates within purine metabolism; GMP biosynthesis; GMP from XMP (L-Gln route): step 1/1. Catalyzes the synthesis of GMP from XMP. The sequence is that of GMP synthase [glutamine-hydrolyzing] from Prochlorococcus marinus (strain MIT 9215).